Reading from the N-terminus, the 754-residue chain is 17S U2 SnRNP complex component HTATSF1 (754 aa).

Disordered stretches follow at residues 1 to 53 (MSGT…YEWD) and 81 to 122 (GASS…KAES). An N-acetylserine modification is found at Ser-2. Over residues 90–122 (EDVHARTAEEPPQEKAPEPTDPRKKGEKRKAES) the composition is skewed to basic and acidic residues. RRM domains lie at 133-218 (TNVY…VAKF) and 264-349 (RVVI…AWDG). The interval 259–353 (RMRHERVVII…AQAWDGTTDY (95 aa)) is U2AF homology motif (UHM). Position 297 is an N6-acetyllysine (Lys-297). The tract at residues 380–415 (RGLRRSDSVSASERAGPSRARHFSEHPSTSKMNAQE) is disordered. A mediates interaction with the P-TEFb complex region spans residues 381–754 (GLRRSDSVSA…ILSSDDDDDI (374 aa)). A phosphoserine mark is found at Ser-387, Ser-403, Ser-407, and Ser-409. Residues 405 to 415 (HPSTSKMNAQE) are compositionally biased toward polar residues. Residues Lys-429 and Lys-430 each participate in a glycyl lysine isopeptide (Lys-Gly) (interchain with G-Cter in SUMO2) cross-link. Positions 433–754 (KTEDGGEFEE…ILSSDDDDDI (322 aa)) are disordered. 3 positions are modified to phosphoserine: Ser-445, Ser-452, and Ser-453. Over residues 462 to 476 (CPGKESEEGCPKRGF) the composition is skewed to basic and acidic residues. Phosphoserine is present on residues Ser-481, Ser-485, Ser-494, Ser-498, Ser-521, and Ser-529. A compositionally biased stretch (basic and acidic residues) spans 508–538 (LRNDCEENGFAKESEDDPNKESEEEVGPTKE). A compositionally biased stretch (acidic residues) spans 539 to 552 (SEEDDSEKESDEDC). Residues 553-563 (SEKQSEDGSER) are compositionally biased toward basic and acidic residues. Phosphoserine occurs at positions 557, 561, and 579. The segment covering 564–579 (EFEENGLEKDLDEEGS) has biased composition (acidic residues). A compositionally biased stretch (basic and acidic residues) spans 580–590 (EKELHENVLDK). Over residues 591–606 (ELEENDSENSEFEDDG) the composition is skewed to acidic residues. 5 positions are modified to phosphoserine: Ser-597, Ser-600, Ser-607, Ser-616, and Ser-624. Acidic residues-rich tracts occupy residues 613–633 (EEGS…EEDT) and 640–651 (DESNEKEDEEYA). Position 633 is a phosphothreonine (Thr-633). At Ser-642 the chain carries Phosphoserine. Residues 652–674 (DEKGLEAADKKEEEGDADEKLFE) show a composition bias toward basic and acidic residues. The span at 675–713 (ESDDKEDEDADGKEVEDADEKLFEDDDSNEKLFDEEEDS) shows a compositional bias: acidic residues. Phosphoserine occurs at positions 676, 702, 713, 721, and 748. The segment covering 714–725 (NEKLFDDSDERG) has biased composition (basic and acidic residues).

It belongs to the HTATSF1 family. In terms of assembly, component of the 17S U2 SnRNP complex, a ribonucleoprotein complex that contains small nuclear RNA (snRNA) U2 and a number of specific proteins. Within the 17S U2 SnRNP complex, interacts (via UHM region) directly with SF3B1. Component of a complex which is at least composed of HTATSF1/Tat-SF1, the P-TEFb complex components CDK9 and CCNT1, RNA polymerase II, SUPT5H, and NCL/nucleolin. Interacts with GTF2F2/RAP30 and POLR2A. Interacts with TCERG1/CA150. Interacts with (poly-ADP-ribosylated) RPA1; promoting HTATSF1 recruitment to DNA damage sites. Interacts (when phosphorylated) with TOPBP1; promoting recruitment of TOPBP1 to DNA damage sites during S-phase. Post-translationally, phosphorylation at Ser-748 by CK2 during S-phase in response to DNA damage promotes interaction with TOPBP1 and double-strand break (DSB) repair via homologous recombination.

The protein resides in the nucleus. It localises to the chromosome. Its function is as follows. Component of the 17S U2 SnRNP complex of the spliceosome, a large ribonucleoprotein complex that removes introns from transcribed pre-mRNAs. The 17S U2 SnRNP complex (1) directly participates in early spliceosome assembly and (2) mediates recognition of the intron branch site during pre-mRNA splicing by promoting the selection of the pre-mRNA branch-site adenosine, the nucleophile for the first step of splicing. Within the 17S U2 SnRNP complex, HTATSF1 is required to stabilize the branchpoint-interacting stem loop. HTATSF1 is displaced from the 17S U2 SnRNP complex before the stable addition of the 17S U2 SnRNP complex to the spliceosome, destabilizing the branchpoint-interacting stem loop and allowing to probe intron branch site sequences. Also acts as a regulator of transcriptional elongation, possibly by mediating the reciprocal stimulatory effect of splicing on transcriptional elongation. Involved in double-strand break (DSB) repair via homologous recombination in S-phase by promoting the recruitment of TOPBP1 to DNA damage sites. Mechanistically, HTATSF1 is (1) recruited to DNA damage sites in S-phase via interaction with poly-ADP-ribosylated RPA1 and (2) phosphorylated by CK2, promoting recruitment of TOPBP1, thereby facilitating RAD51 nucleofilaments formation and RPA displacement, followed by homologous recombination. The polypeptide is 17S U2 SnRNP complex component HTATSF1 (HTATSF1) (Pongo abelii (Sumatran orangutan)).